Here is a 1076-residue protein sequence, read N- to C-terminus: Vacuolar membrane protease (1076 aa).

Residues Met1–Pro11 lie on the Cytoplasmic side of the membrane. The chain crosses the membrane as a helical span at residues Met12–Ile32. Residues His33–Thr437 are Vacuolar-facing. N-linked (GlcNAc...) asparagine glycans are attached at residues Asn50, Asn99, and Asn156. Residues His220 and Asp232 each coordinate Zn(2+). Glu266 acts as the Proton acceptor in catalysis. Positions 267, 292, and 364 each coordinate Zn(2+). A helical transmembrane segment spans residues Leu438–Tyr458. Topologically, residues Leu459 to Ala491 are cytoplasmic. A helical transmembrane segment spans residues Phe492–Ile512. The Vacuolar portion of the chain corresponds to Asn513–Tyr525. The chain crosses the membrane as a helical span at residues Ala526–Cys546. Residues Asn547–Arg556 lie on the Cytoplasmic side of the membrane. A helical transmembrane segment spans residues Gly557–Tyr577. Over Glu578–Ser584 the chain is Vacuolar. A helical transmembrane segment spans residues Gly585–Cys605. The Cytoplasmic segment spans residues Glu606–Tyr738. 2 disordered regions span residues Asp619–Val662 and Ser701–Gly720. Over residues Gln621–His632 the composition is skewed to basic and acidic residues. Over residues Pro647–Glu660 the composition is skewed to acidic residues. Residues Leu739–Ala759 form a helical membrane-spanning segment. Over Leu760–Phe771 the chain is Vacuolar. Residues Leu772–Ile792 form a helical membrane-spanning segment. The Cytoplasmic segment spans residues His793–Met799. The chain crosses the membrane as a helical span at residues Pro800–Phe820. Residues Ser821–Val1076 are Vacuolar-facing. Asn912 is a glycosylation site (N-linked (GlcNAc...) asparagine).

This sequence belongs to the peptidase M28 family. Zn(2+) is required as a cofactor.

The protein resides in the vacuole membrane. Its function is as follows. May be involved in vacuolar sorting and osmoregulation. This Sclerotinia sclerotiorum (strain ATCC 18683 / 1980 / Ss-1) (White mold) protein is Vacuolar membrane protease.